A 198-amino-acid polypeptide reads, in one-letter code: Holliday junction branch migration complex subunit RuvA (198 aa).

Residues 1-63 are domain I; the sequence is MIAYLSGAVR…EDAQLLFGFL (63 aa). The domain II stretch occupies residues 64–142; it reads DTDSLRLFDL…EHLAAGAPVS (79 aa). Positions 143-150 are flexible linker; it reads AGKAALTS. The segment at 150–198 is domain III; that stretch reads STAGRDAIEALLALGFREPQVRSVVAELLAADPEQSADALIRKGLGKLR.

The protein belongs to the RuvA family. As to quaternary structure, homotetramer. Forms an RuvA(8)-RuvB(12)-Holliday junction (HJ) complex. HJ DNA is sandwiched between 2 RuvA tetramers; dsDNA enters through RuvA and exits via RuvB. An RuvB hexamer assembles on each DNA strand where it exits the tetramer. Each RuvB hexamer is contacted by two RuvA subunits (via domain III) on 2 adjacent RuvB subunits; this complex drives branch migration. In the full resolvosome a probable DNA-RuvA(4)-RuvB(12)-RuvC(2) complex forms which resolves the HJ.

The protein resides in the cytoplasm. Functionally, the RuvA-RuvB-RuvC complex processes Holliday junction (HJ) DNA during genetic recombination and DNA repair, while the RuvA-RuvB complex plays an important role in the rescue of blocked DNA replication forks via replication fork reversal (RFR). RuvA specifically binds to HJ cruciform DNA, conferring on it an open structure. The RuvB hexamer acts as an ATP-dependent pump, pulling dsDNA into and through the RuvAB complex. HJ branch migration allows RuvC to scan DNA until it finds its consensus sequence, where it cleaves and resolves the cruciform DNA. This Deinococcus geothermalis (strain DSM 11300 / CIP 105573 / AG-3a) protein is Holliday junction branch migration complex subunit RuvA.